The following is a 430-amino-acid chain: Alpha-humulene synthase asR6 (430 aa).

It belongs to the terpene synthase family. Alpha-humulene synthase eupE subfamily. Mg(2+) serves as cofactor.

The enzyme catalyses (2E,6E)-farnesyl diphosphate = alpha-humulene + diphosphate. It participates in secondary metabolite biosynthesis; terpenoid biosynthesis. Its function is as follows. Alpha-humulene synthase; part of the gene cluster that mediates the biosynthesis of xenovulene A, an unusual meroterpenoid that has potent inhibitory effects on the human gamma-aminobutyrate A (GABAA) benzodiazepine receptor. The first step of xenovulene A biosynthesis is the biosynthesis of 3-methylorcinaldehyde performed by the non-reducing polyketide synthase aspks1. The salicylate hydroxylase asL1 then catalyzes the oxidative dearomatization of 3-methylorcinaldehyde to yield a dearomatized hydroxycyclohexadione. The 2-oxoglutarate-dependent dioxygenase asL3 further catalyzes the oxidative ring expansion to provide the first tropolone metabolite. The cytochrome P450 monooxygenase asR2 allows the synthesis of tropolone hemiacetal. In parallel, a previously unrecognised class of terpene cyclase, asR6, produces alpha-humulene from farnesylpyrophosphate (FPP). The putative Diels-Alderase asR5 probably catalyzes the formation of the tropolone-humulene skeleton by linking humulene and the polyketide moiety. Oxidative-ring contractions catalyzed by asL4 and asL6 then processively remove carbon atoms from the polyketide to yield xenovulene A. This is Alpha-humulene synthase asR6 from Sarocladium schorii (Acremonium strictum (strain IMI 501407)).